We begin with the raw amino-acid sequence, 301 residues long: HTH-type transcriptional regulator EstR (301 aa).

An HTH lysR-type domain is found at 5–62; sequence PSLRQLSYLVTLSETLHFTEAARRSFVTQSTLSGGIMELERLLGGVLVERDRQNVRLT. A DNA-binding region (H-T-H motif) is located at residues 22 to 41; sequence FTEAARRSFVTQSTLSGGIM.

It belongs to the LysR transcriptional regulatory family.

Functionally, transcriptional regulator of the esterase operon. This Acinetobacter baylyi (strain ATCC 33305 / BD413 / ADP1) protein is HTH-type transcriptional regulator EstR (estR).